Here is a 983-residue protein sequence, read N- to C-terminus: MIATLFIIFAFIRAFPWSRKRGRPALALTLMPEGGEDHRGDLNQKGENNNRPRPSISLANNGEAMAPRTRRKSSKFHEVTFSGSVGGGDSDGGGEAINGGNLDVSPSKRHSLSTTTSNSSSAPYRYLSGSSRSRGSRGDCHEYYQLQQHSSSLSNGNRGNRGLSQRSDTMATEAEGEEFDVDPMDEDDEDQTYDRETEEFYSNIQDAAGTGSSSRSKRSSLFSRSDSSATTTSSSGGGTFTGGKRRSAASILSSSMCSDLMTSDRRSSTATEYSVKSVTTGNTSQRRSSGRIRRYVSRMTIAGARRRTTGSFDVENGQGARSPLEGGSPSAGLVLQNLPQRRESFLYRSDSDFEMSPKSMSRNSSIASESHGEDLIVTPFAQILASLRSVRNNLLSLTNVPASNKSRRPNQSSSASRSGNPPGAPLSQGEEAYTRLATDTIEELDWCLDQLETIQTHRSVSDMASLKFKRMLNKELSHFSESSRSGNQISEYICSTFLDKQQEFDLPSLRVEDNPELVAANAAAGQQSAGQYARSRSPRGPPMSQISGVKRPLSHTNSFTGERLPTFGVETPRENELGTLLGELDTWGIQIFSIGEFSVNRPLTCVAYTIFQSRELLTSLMIPPKTFLNFMSTLEDHYVKDNPFHNSLHAADVTQSTNVLLNTPALEGVFTPLEVGGALFAACIHDVDHPGLTNQFLVNSSSELALMYNDESVLENHHLAVAFKLLQNQGCDIFCNMQKKQRQTLRKMVIDIVLSTDMSKHMSLLADLKTMVETKKVAGSGVLLLDNYTDRIQVLENLVHCADLSNPTKPLPLYKRWVALLMEEFFLQGDKERESGMDISPMCDRHNATIEKSQVGFIDYIVHPLWETWADLVHPDAQDILDTLEENRDYYQSMIPPSPPPSGVDENPQEDRIRFQVTLEESDQENLAELEEGDESGGESTTTGTTGTTAASALSGAGGGGGGGGGMAPRTGGCQNQPQHGGM.

Disordered stretches follow at residues 31–333 (MPEG…SAGL), 349–370 (SDSD…ASES), 400–429 (VPAS…LSQG), and 528–566 (SAGQ…RLPT). Basic and acidic residues predominate over residues 35–50 (GEDHRGDLNQKGENNN). Positions 51–60 (RPRPSISLAN) are enriched in polar residues. Residues 84-97 (SVGGGDSDGGGEAI) are compositionally biased toward gly residues. Low complexity-rich tracts occupy residues 112–121 (LSTTTSNSSS) and 145–167 (QLQQ…SQRS). The segment covering 174-199 (AEGEEFDVDPMDEDDEDQTYDRETEE) has biased composition (acidic residues). Composition is skewed to low complexity over residues 219 to 234 (SSLF…TTSS) and 248 to 261 (AASI…SDLM). Composition is skewed to polar residues over residues 268 to 287 (STAT…SQRR), 358 to 368 (KSMSRNSSIAS), and 401 to 419 (PASN…SRSG). Residues 569–898 (VETPRENELG…DYYQSMIPPS (330 aa)) form the PDEase domain. His645 serves as the catalytic Proton donor. 645–649 (HNSLH) serves as a coordination point for 3',5'-cyclic AMP. Residues His649, His685, Asp686, and Asp803 each contribute to the a divalent metal cation site. Positions 686, 803, and 854 each coordinate 3',5'-cyclic AMP. The span at 920-937 (EESDQENLAELEEGDESG) shows a compositional bias: acidic residues. The interval 920-983 (EESDQENLAE…CQNQPQHGGM (64 aa)) is disordered. Residues 938–955 (GESTTTGTTGTTAASALS) are compositionally biased toward low complexity. A compositionally biased stretch (gly residues) spans 956-967 (GAGGGGGGGGGM). Positions 973–983 (GCQNQPQHGGM) are enriched in polar residues.

This sequence belongs to the cyclic nucleotide phosphodiesterase family. PDE4 subfamily. As to quaternary structure, monomer. The cofactor is a divalent metal cation.

It carries out the reaction 3',5'-cyclic AMP + H2O = AMP + H(+). It participates in purine metabolism; 3',5'-cyclic AMP degradation; AMP from 3',5'-cyclic AMP: step 1/1. Hydrolyzes the second messenger cAMP, which is a key regulator of many important physiological processes. Vital for female fertility. Required for learning/memory. This is 3',5'-cyclic-AMP phosphodiesterase, isoforms N/G from Drosophila melanogaster (Fruit fly).